Reading from the N-terminus, the 106-residue chain is ATP-dependent Clp protease adapter protein ClpS (106 aa).

This sequence belongs to the ClpS family. As to quaternary structure, binds to the N-terminal domain of the chaperone ClpA.

Functionally, involved in the modulation of the specificity of the ClpAP-mediated ATP-dependent protein degradation. The chain is ATP-dependent Clp protease adapter protein ClpS from Salmonella agona (strain SL483).